A 257-amino-acid polypeptide reads, in one-letter code: GTP cyclohydrolase FolE2 (257 aa).

It belongs to the GTP cyclohydrolase IV family.

The catalysed reaction is GTP + H2O = 7,8-dihydroneopterin 3'-triphosphate + formate + H(+). It participates in cofactor biosynthesis; 7,8-dihydroneopterin triphosphate biosynthesis; 7,8-dihydroneopterin triphosphate from GTP: step 1/1. In terms of biological role, converts GTP to 7,8-dihydroneopterin triphosphate. This Pelobacter propionicus (strain DSM 2379 / NBRC 103807 / OttBd1) protein is GTP cyclohydrolase FolE2.